The chain runs to 185 residues: dTTP/UTP pyrophosphatase (185 aa).

The active-site Proton acceptor is the Asp-67.

Belongs to the Maf family. YhdE subfamily. Requires a divalent metal cation as cofactor.

It localises to the cytoplasm. The enzyme catalyses dTTP + H2O = dTMP + diphosphate + H(+). It carries out the reaction UTP + H2O = UMP + diphosphate + H(+). Nucleoside triphosphate pyrophosphatase that hydrolyzes dTTP and UTP. May have a dual role in cell division arrest and in preventing the incorporation of modified nucleotides into cellular nucleic acids. The protein is dTTP/UTP pyrophosphatase of Lacticaseibacillus casei (strain BL23) (Lactobacillus casei).